The sequence spans 632 residues: Transcription factor asR4 (632 aa).

The segment at residues 26-52 is a DNA-binding region (zn(2)-C6 fungal-type); sequence CDSCNKSKTKCPGGNPCPLCQCSGIRC. The span at 101-111 shows a compositional bias: polar residues; that stretch reads HISSNPSPVGS. Disordered stretches follow at residues 101-129, 270-311, and 324-356; these read HISS…QQQQ, SNEY…GDGH, and TSAS…VPRT. Low complexity predominate over residues 112 to 129; sequence QSQQQQHPQQAGQQQQQQ. Composition is skewed to polar residues over residues 270–286, 294–306, and 329–340; these read SNEY…TTDD, PDSS…SSSV, and IVEQQSIPTSPV.

The protein resides in the nucleus. Functionally, transcription factor; part of the gene cluster that mediates the biosynthesis of xenovulene A, an unusual meroterpenoid that has potent inhibitory effects on the human gamma-aminobutyrate A (GABAA) benzodiazepine receptor. This is Transcription factor asR4 from Sarocladium schorii (Acremonium strictum (strain IMI 501407)).